The primary structure comprises 271 residues: GATA transcription factor 19 (271 aa).

The interval 1-23 is disordered; that stretch reads MAAEPPADGRDPPADDGAAGDGA. A Tify domain is found at 33–68; sequence LSAASEQLTLVYQGEVYVFDPVPPQKVQAVLLVLGG. Residues 95–137 enclose the CCT domain; it reads RVASLMRFREKRKERCFDKKIRYSVRKEVAQKMKRRKGQFAGR. The GATA-type zinc finger occupies 166 to 193; that stretch reads CQNCGISSRLTPAMRRGPAGPRSLCNAC. The disordered stretch occupies residues 238–271; that stretch reads NQTTMKTDTEMVPEQEQKADVLPPTKEEDSMATS. Positions 252–271 are enriched in basic and acidic residues; sequence QEQKADVLPPTKEEDSMATS.

It belongs to the type IV zinc-finger family. Class C subfamily.

It is found in the nucleus. Transcriptional activator that specifically binds 5'-GATA-3' or 5'-GAT-3' motifs within gene promoters. The protein is GATA transcription factor 19 of Oryza sativa subsp. japonica (Rice).